The sequence spans 106 residues: Acidic phospholipase A2 PhTX-III (106 aa).

Y23, G25, and G27 together coordinate Ca(2+). 5 disulfide bridges follow: C24–C40, C39–C75, C45–C106, C46–C68, and C55–C66. Residue H43 is part of the active site. Residue D44 participates in Ca(2+) binding. Residue D69 is part of the active site.

Requires Ca(2+) as cofactor. As to expression, expressed by the venom gland.

Its subcellular location is the secreted. It carries out the reaction a 1,2-diacyl-sn-glycero-3-phosphocholine + H2O = a 1-acyl-sn-glycero-3-phosphocholine + a fatty acid + H(+). Partially inhibited by magnesium ions and completely inhibited by zinc ions These divalent cations may act as competitive antagonists of the cofactor. Snake venom phospholipase A2 (PLA2) that induces inflammatory response, with local edema and release of cytokines IL-1 alpha, IL-6 and TNF-alpha. Does not exhibit myotoxic, anticoagulant and antibacterial effects. Release of pro-inflammatory cytokines may be due to mast cell degranulation, and edema may be induced by arachidonic acid that results from the PLA2 catalytic activity. PLA2 catalyzes the calcium-dependent hydrolysis of the 2-acyl groups in 3-sn-phosphoglycerides. This chain is Acidic phospholipase A2 PhTX-III, found in Bothrocophias hyoprora (Amazonian hognose viper).